Here is a 445-residue protein sequence, read N- to C-terminus: Phosphoglucosamine mutase (445 aa).

Residue S101 is the Phosphoserine intermediate of the active site. Mg(2+) contacts are provided by S101, D240, D242, and D244. Position 101 is a phosphoserine (S101).

Belongs to the phosphohexose mutase family. It depends on Mg(2+) as a cofactor. In terms of processing, activated by phosphorylation.

The enzyme catalyses alpha-D-glucosamine 1-phosphate = D-glucosamine 6-phosphate. Functionally, catalyzes the conversion of glucosamine-6-phosphate to glucosamine-1-phosphate. In Pseudomonas paraeruginosa (strain DSM 24068 / PA7) (Pseudomonas aeruginosa (strain PA7)), this protein is Phosphoglucosamine mutase.